A 135-amino-acid polypeptide reads, in one-letter code: S-adenosylmethionine decarboxylase proenzyme (135 aa).

S64 serves as the catalytic Schiff-base intermediate with substrate; via pyruvic acid. S64 is modified (pyruvic acid (Ser); by autocatalysis). The active-site Proton acceptor; for processing activity is H69. C84 acts as the Proton donor; for catalytic activity in catalysis.

This sequence belongs to the prokaryotic AdoMetDC family. Type 1 subfamily. In terms of assembly, heterotetramer of two alpha and two beta chains arranged as a dimer of alpha/beta heterodimers. Requires pyruvate as cofactor. Post-translationally, is synthesized initially as an inactive proenzyme. Formation of the active enzyme involves a self-maturation process in which the active site pyruvoyl group is generated from an internal serine residue via an autocatalytic post-translational modification. Two non-identical subunits are generated from the proenzyme in this reaction, and the pyruvate is formed at the N-terminus of the alpha chain, which is derived from the carboxyl end of the proenzyme. The post-translation cleavage follows an unusual pathway, termed non-hydrolytic serinolysis, in which the side chain hydroxyl group of the serine supplies its oxygen atom to form the C-terminus of the beta chain, while the remainder of the serine residue undergoes an oxidative deamination to produce ammonia and the pyruvoyl group blocking the N-terminus of the alpha chain.

It carries out the reaction S-adenosyl-L-methionine + H(+) = S-adenosyl 3-(methylsulfanyl)propylamine + CO2. Its pathway is amine and polyamine biosynthesis; S-adenosylmethioninamine biosynthesis; S-adenosylmethioninamine from S-adenosyl-L-methionine: step 1/1. In terms of biological role, catalyzes the decarboxylation of S-adenosylmethionine to S-adenosylmethioninamine (dcAdoMet), the propylamine donor required for the synthesis of the polyamines spermine and spermidine from the diamine putrescine. This chain is S-adenosylmethionine decarboxylase proenzyme, found in Aquifex aeolicus (strain VF5).